Here is a 221-residue protein sequence, read N- to C-terminus: Probable septum site-determining protein MinC (221 aa).

The protein belongs to the MinC family. Interacts with MinD and FtsZ.

Its function is as follows. Cell division inhibitor that blocks the formation of polar Z ring septums. Rapidly oscillates between the poles of the cell to destabilize FtsZ filaments that have formed before they mature into polar Z rings. Prevents FtsZ polymerization. In Shewanella loihica (strain ATCC BAA-1088 / PV-4), this protein is Probable septum site-determining protein MinC.